A 1816-amino-acid polypeptide reads, in one-letter code: uncharacterized protein (1816 aa).

Disordered stretches follow at residues 338–357 (DSSS…NNNN) and 562–605 (ELEK…IKPK). The span at 339–357 (SSSSSSNNNNNNNNNNNNN) shows a compositional bias: low complexity. The span at 562-577 (ELEKERIKKEKEDSKK) shows a compositional bias: basic and acidic residues. Positions 581–603 (KQSSSSSSSSTTTTSTTTSSTIK) are enriched in low complexity. A Helicase ATP-binding domain is found at 826–999 (LDIVDKRESA…FLKKIDPNRK (174 aa)). An ATP-binding site is contributed by 839 to 846 (ASTSSGKT). A DEAH box motif is present at residues 949–952 (DEVH). In terms of domain architecture, Helicase C-terminal spans 1198-1379 (QLDLVIERFQ…SVVSPSLCLS (182 aa)). Residues 1388-1487 (TNGSANKSNE…TTTKTPTTTS (100 aa)) form a disordered region. Basic and acidic residues predominate over residues 1395 to 1427 (SNEENKVQVKENEKEREKEKEKEKEKEKEKETI). The segment covering 1445–1454 (NWDDDEEETA) has biased composition (acidic residues). Low complexity predominate over residues 1456-1487 (STKTTPATTPTTTTTENTPATTTTTKTPTTTS).

It belongs to the helicase family. SKI2 subfamily.

The protein localises to the nucleus. This is an uncharacterized protein from Dictyostelium discoideum (Social amoeba).